A 486-amino-acid chain; its full sequence is Arginine/agmatine antiporter (486 aa).

A run of 12 helical transmembrane segments spans residues 12 to 32 (LGAI…GIFS), 41 to 61 (AGAG…FFIA), 85 to 105 (GFGP…QIFG), 129 to 149 (NTIP…FIVL), 160 to 180 (IIGT…TAFA), 211 to 231 (STML…VMSA), 242 to 262 (ATLL…ILPF), 296 to 316 (VGLL…VAEI), 341 to 361 (LSLY…YFST), 367 to 387 (MLSI…AFLF), 418 to 438 (LWLI…LLAL), and 461 to 481 (EVTK…LFST).

This sequence belongs to the amino acid-polyamine-organocation (APC) superfamily. Basic amino acid/polyamine antiporter (APA) (TC 2.A.3.2) family.

It localises to the cell inner membrane. Catalyzes the exchange of L-arginine for agmatine. The arginine uptake by the bacterium in the macrophage may be a virulence factor against the host innate immune response. This Chlamydia caviae (strain ATCC VR-813 / DSM 19441 / 03DC25 / GPIC) (Chlamydophila caviae) protein is Arginine/agmatine antiporter (aaxC).